The chain runs to 175 residues: UPF0398 protein SSA_1858 (175 aa).

Belongs to the UPF0398 family.

The protein is UPF0398 protein SSA_1858 of Streptococcus sanguinis (strain SK36).